The following is a 770-amino-acid chain: Amyloid-beta precursor protein (770 aa).

Positions Met-1–Ala-17 are cleaved as a signal peptide. Topologically, residues Leu-18–Ala-701 are extracellular. The tract at residues Leu-28–Val-123 is GFLD subdomain. Positions Leu-28–Leu-189 constitute an E1 domain. Disulfide bonds link Cys-38–Cys-62, Cys-73–Cys-117, Cys-98–Cys-105, Cys-133–Cys-187, Cys-144–Cys-174, and Cys-158–Cys-186. Asn-96–His-110 contacts heparin. Residues Asp-131–Leu-189 are cuBD subdomain. The copper-binding stretch occupies residues Phe-135 to Lys-155. Residues His-147, His-151, and Tyr-168 each contribute to the Cu(2+) site. Positions Gly-181–Pro-188 are zinc-binding. Residues Glu-183, Cys-186, and Cys-187 each contribute to the Zn(2+) site. Positions Ile-196–Asp-207 are enriched in acidic residues. Residues Ile-196 to Glu-284 form a disordered region. Ser-198 carries the phosphoserine; by CK2 modification. Ser-206 is subject to Phosphoserine; by CK1. 2 positions are modified to sulfotyrosine: Tyr-217 and Tyr-262. Over residues Val-228 to Glu-264 the composition is skewed to acidic residues. Over residues Arg-268–Glu-281 the composition is skewed to low complexity. 3 cysteine pairs are disulfide-bonded: Cys-291–Cys-341, Cys-300–Cys-324, and Cys-316–Cys-337. A BPTI/Kunitz inhibitor domain is found at Cys-291–Cys-341. Tyr-336 is modified (sulfotyrosine). The OX-2 signature appears at Val-344–Pro-365. The E2 domain occupies Ala-374–Leu-565. Residues Phe-391 to Leu-423 are heparin-binding. At Ser-441 the chain carries Phosphoserine. The heparin-binding stretch occupies residues Phe-491–Lys-522. Tyr-497 carries the post-translational modification Phosphotyrosine. The interval Ala-523–Arg-540 is collagen-binding. Residues Asn-542 and Asn-571 are each glycosylated (N-linked (GlcNAc...) asparagine). Cu(2+)-binding residues include His-677, Tyr-681, His-684, and His-685. Zn(2+) contacts are provided by His-677, Tyr-681, His-684, and His-685. The interaction with PSEN1 stretch occupies residues Val-695–Met-722. Residues Ile-702–Met-722 form a helical membrane-spanning segment. At Leu-723–Asn-770 the chain is on the cytoplasmic side. The Basolateral sorting signal motif lies at Lys-724–Gly-734. Thr-729 is subject to Phosphothreonine. Phosphoserine; by APP-kinase I is present on Ser-730. An interaction with G(o)-alpha region spans residues His-732 to Lys-751. Thr-743 is subject to Phosphothreonine; by CDK5 and MAPK10. Residues Gly-756–Asn-770 form a required for the interaction with KIF5B and for anterograde transport in axons region. Tyr-757 carries the post-translational modification Phosphotyrosine; by ABL1. The YENPXY motif; contains endocytosis signal motif lies at Tyr-757–Tyr-762. Residue Lys-763 forms a Glycyl lysine isopeptide (Lys-Gly) (interchain with G-Cter in ubiquitin) linkage.

Belongs to the APP family. In terms of assembly, binds, via its C-terminus, to the PID domain of several cytoplasmic proteins, including APBB family members, the APBA family, MAPK8IP1, SHC1 and NUMB and DAB1. Binding to DAB1 inhibits its serine phosphorylation. Interacts (via NPXY motif) with DAB2 (via PID domain); the interaction is impaired by tyrosine phosphorylation of the NPXY motif. Also interacts with GPCR-like protein BPP, APPBP1, IB1, KNS2 (via its TPR domains), APPBP2 (via BaSS) and DDB1. In vitro, it binds MAPT via the MT-binding domains. Associates with microtubules in the presence of ATP and in a kinesin-dependent manner. Interacts, through a C-terminal domain, with GNAO1. Amyloid-beta protein 42 binds CHRNA7 in hippocampal neurons. Amyloid-beta associates with HADH2. Interacts with CPEB1, ANKS1B and AGER. Interacts with ITM2B. Interacts with ITM2C. Interacts with IDE. Can form homodimers; dimerization is enhanced in the presence of Cu(2+) ions. Can form homodimers; this is promoted by heparin binding. Amyloid-beta protein 40 interacts with S100A9. CTF-alpha product of APP interacts with GSAP. Interacts with SORL1 (via N-terminal ectodomain); this interaction retains APP in the trans-Golgi network and reduces processing into soluble APP-alpha and amyloid-beta peptides. The C99 fragment also interacts with SORL1. Interacts with PLD3. Interacts with VDAC1. Interacts with NSG1; could regulate APP processing. Amyloid-beta protein 42 interacts with FPR2. Interacts (via transmembrane region) with PSEN1; the interaction is direct. Interacts with LRRK2. Interacts (via cytoplasmic domain) with KIF5B. Interacts (via C-terminus) with APBB2/FE65L1 (via C-terminus). Interacts (via intracellular domain) with APBB3. Post-translationally, proteolytically processed under normal cellular conditions. Cleavage either by alpha-secretase, beta-secretase or theta-secretase leads to generation and extracellular release of soluble APP peptides, S-APP-alpha and S-APP-beta, and the retention of corresponding membrane-anchored C-terminal fragments, C80, C83 and C99. Subsequent processing of C80 and C83 by gamma-secretase yields P3 peptides. This is the major secretory pathway and is non-amyloidogenic. Alternatively, presenilin/nicastrin-mediated gamma-secretase processing of C99 releases the amyloid-beta proteins, amyloid-beta protein 40 and amyloid-beta protein 42, major components of amyloid plaques, and the cytotoxic C-terminal fragments, gamma-CTF(50), gamma-CTF(57) and gamma-CTF(59). PSEN1 cleavage is more efficient with C83 than with C99 as substrate (in vitro). Amyloid-beta protein 40 and Amyloid-beta protein 42 are cleaved by ACE. Many other minor amyloid-beta peptides, amyloid-beta 1-X peptides, are found in cerebral spinal fluid (CSF) including the amyloid-beta X-15 peptides, produced from the cleavage by alpha-secretase. Proteolytically cleaved by caspases during neuronal apoptosis. Cleavage at Asp-739 by either caspase-3, -8 or -9 results in the production of the neurotoxic C31 peptide and the increased production of amyloid-beta peptides. In terms of processing, N- and O-glycosylated. Post-translationally, phosphorylation in the C-terminal on tyrosine, threonine and serine residues is neuron-specific. Phosphorylation can affect APP processing, neuronal differentiation and interaction with other proteins. Phosphorylated on Thr-743 in neuronal cells by Cdc5 kinase and Mapk10, in dividing cells by Cdc2 kinase in a cell-cycle dependent manner with maximal levels at the G2/M phase and, in vitro, by GSK-3-beta. The Thr-743 phosphorylated form causes a conformational change which reduces binding of Fe65 family members. In dopaminergic (DA) neurons, phosphorylation on Thr-743 by LRKK2 promotes the production and the nuclear translocation of the APP intracellular domain (AICD) which induces DA neuron apoptosis. Phosphorylation on Tyr-757 is required for SHC binding. Phosphorylated in the extracellular domain by casein kinases on both soluble and membrane-bound APP. This phosphorylation is inhibited by heparin. Extracellular binding and reduction of copper, results in a corresponding oxidation of Cys-144 and Cys-158, and the formation of a disulfide bond. In terms of processing, trophic-factor deprivation triggers the cleavage of surface APP by beta-secretase to release sAPP-beta which is further cleaved to release an N-terminal fragment of APP (N-APP). Post-translationally, amyloid-beta peptides are degraded by IDE. Sulfated on tyrosine residues.

The protein localises to the cell membrane. It localises to the membrane. The protein resides in the perikaryon. Its subcellular location is the cell projection. It is found in the growth cone. The protein localises to the clathrin-coated pit. It localises to the early endosome. The protein resides in the cytoplasmic vesicle. Its subcellular location is the endoplasmic reticulum. It is found in the golgi apparatus. The protein localises to the secreted. It localises to the cell surface. The protein resides in the nucleus. Its subcellular location is the cytoplasm. In terms of biological role, functions as a cell surface receptor and performs physiological functions on the surface of neurons relevant to neurite growth, neuronal adhesion and axonogenesis. Interaction between APP molecules on neighboring cells promotes synaptogenesis. Involved in cell mobility and transcription regulation through protein-protein interactions. Can promote transcription activation through binding to APBB1-KAT5 and inhibit Notch signaling through interaction with Numb. Couples to apoptosis-inducing pathways such as those mediated by G(o) and JIP. Inhibits G(o)-alpha ATPase activity. Acts as a kinesin I membrane receptor, mediating the axonal transport of beta-secretase and presenilin 1. By acting as a kinesin I membrane receptor, plays a role in axonal anterograde transport of cargo towards synapses in axons. May be involved in copper homeostasis/oxidative stress through copper ion reduction. In vitro, copper-metallated APP induces neuronal death directly or is potentiated through Cu(2+)-mediated low-density lipoprotein oxidation. Can regulate neurite outgrowth through binding to components of the extracellular matrix such as heparin and collagen I and IV. Induces a AGER-dependent pathway that involves activation of p38 MAPK, resulting in internalization of amyloid-beta peptide and mitochondrial dysfunction in cultured cortical neurons. Provides Cu(2+) ions for GPC1 which are required for release of nitric oxide (NO) and subsequent degradation of the heparan sulfate chains on GPC1. Functionally, amyloid-beta peptides are lipophilic metal chelators with metal-reducing activity. Binds transient metals such as copper, zinc and iron. Its function is as follows. The gamma-CTF peptides as well as the caspase-cleaved peptides, including C31, are potent enhancers of neuronal apoptosis. The protein is Amyloid-beta precursor protein of Sus scrofa (Pig).